The sequence spans 187 residues: Segregation and condensation protein B (187 aa).

The protein belongs to the ScpB family. In terms of assembly, homodimer. Homodimerization may be required to stabilize the binding of ScpA to the Smc head domains. Component of a cohesin-like complex composed of ScpA, ScpB and the Smc homodimer, in which ScpA and ScpB bind to the head domain of Smc. The presence of the three proteins is required for the association of the complex with DNA.

It is found in the cytoplasm. Participates in chromosomal partition during cell division. May act via the formation of a condensin-like complex containing Smc and ScpA that pull DNA away from mid-cell into both cell halves. The sequence is that of Segregation and condensation protein B from Agathobacter rectalis (strain ATCC 33656 / DSM 3377 / JCM 17463 / KCTC 5835 / VPI 0990) (Eubacterium rectale).